The following is a 176-amino-acid chain: Nicotinamide-nucleotide adenylyltransferase (176 aa).

The protein belongs to the archaeal NMN adenylyltransferase family.

It is found in the cytoplasm. The catalysed reaction is beta-nicotinamide D-ribonucleotide + ATP + H(+) = diphosphate + NAD(+). The protein operates within cofactor biosynthesis; NAD(+) biosynthesis; NAD(+) from nicotinamide D-ribonucleotide: step 1/1. This chain is Nicotinamide-nucleotide adenylyltransferase, found in Halorubrum lacusprofundi (strain ATCC 49239 / DSM 5036 / JCM 8891 / ACAM 34).